Consider the following 157-residue polypeptide: SsrA-binding protein (157 aa).

Positions 134–151 are enriched in basic and acidic residues; that stretch reads HDKRETEKKRDWSKEKGR. The tract at residues 134–157 is disordered; the sequence is HDKRETEKKRDWSKEKGRLMRAKG.

Belongs to the SmpB family.

It localises to the cytoplasm. Required for rescue of stalled ribosomes mediated by trans-translation. Binds to transfer-messenger RNA (tmRNA), required for stable association of tmRNA with ribosomes. tmRNA and SmpB together mimic tRNA shape, replacing the anticodon stem-loop with SmpB. tmRNA is encoded by the ssrA gene; the 2 termini fold to resemble tRNA(Ala) and it encodes a 'tag peptide', a short internal open reading frame. During trans-translation Ala-aminoacylated tmRNA acts like a tRNA, entering the A-site of stalled ribosomes, displacing the stalled mRNA. The ribosome then switches to translate the ORF on the tmRNA; the nascent peptide is terminated with the 'tag peptide' encoded by the tmRNA and targeted for degradation. The ribosome is freed to recommence translation, which seems to be the essential function of trans-translation. This chain is SsrA-binding protein, found in Rhodopseudomonas palustris (strain BisA53).